The sequence spans 304 residues: MSSEMPLPTTIVAPTCSMGEKNVLKRYRRQVSSTRNFKRHVNTNVLRKRRLAAGVRCHDRFYKRLYAEAMCLGSQVYDWPGRSFAKIFGKVMVLDVFKQLTDFRLVFEVNLERRRPDCICMFKLPRDLWEVGCDGVCVILELKTCKFSRNLKTRSKHEQRLTGIKQLLDSKSLIGQIAPQGSDCIVICPMLVFVARRKLSVLHVMCLKKRHIVTDFHRLCSILATASDYKARITDTHKILKRHNTNTIHIQRRSGKASANVTDLRNHIACNKTATLSFSNNQERTGGTAMRNMANIIARLVQRP.

It belongs to the HHV-1 UL24 protein family.

It localises to the host cytoplasm. Its subcellular location is the host nucleus. The protein resides in the host Golgi apparatus. May play a role in the dispersal of host nucleolin from the nucleolus throughout the nucleus leading to a decrease in ribosome biogenesis. This chain is Protein UL24 homolog (MDV035), found in Gallid herpesvirus 2 (strain Chicken/Md5/ATCC VR-987) (GaHV-2).